We begin with the raw amino-acid sequence, 314 residues long: Zinc transporter ZIP3 (314 aa).

At 1-3 (MVK) the chain is on the extracellular side. The chain crosses the membrane as a helical span at residues 4–24 (LLVAKILCMVGMFFFMLLGSL). Residues 25–42 (LPVKIIEMDFEKAHRSKK) lie on the Cytoplasmic side of the membrane. The chain crosses the membrane as a helical span at residues 43–63 (ILSLCNTFGGGVFLATCFNAL). Over 64–85 (LPAVREKLKEVLTLAHISTDYP) the chain is Extracellular. A helical membrane pass occupies residues 86–106 (LAETIMLLGFFMTVFLEQLVL). Residues 107 to 169 (TFRKERPAFI…QELSRSSPLR (63 aa)) are Cytoplasmic-facing. Phosphoserine occurs at positions 125 and 129. A helical transmembrane segment spans residues 170 to 190 (LLSLVFALSAHSVFEGLALGL). Over 191–196 (QEEGEK) the chain is Extracellular. The helical transmembrane segment at 197-217 (VVSLFVGVAIHETLVAVALGI) threads the bilayer. Residues 218–229 (NMARSAMALRDA) lie on the Cytoplasmic side of the membrane. Residues 230-250 (AKLAVTVSAMIPLGISLGLGI) traverse the membrane as a helical segment. Residues 251 to 262 (DSAQGMPSSVAS) are Extracellular-facing. Residues 263-283 (VLLQGLAGGTFLFVTFFEILA) traverse the membrane as a helical segment. Topologically, residues 284–292 (KELEEKSDR) are cytoplasmic. The chain crosses the membrane as a helical span at residues 293–313 (LLKVLFLVLGYTVLAGMVFIK). Position 314 (W314) is a topological domain, extracellular.

The protein belongs to the ZIP transporter (TC 2.A.5) family.

Its subcellular location is the cell membrane. It localises to the apical cell membrane. It carries out the reaction Zn(2+)(in) = Zn(2+)(out). Functionally, transporter for the divalent cation Zn(2+). Mediates the influx of Zn(2+) into cells from extracellular space. Controls Zn(2+) accumulation into dentate gyrus granule cells in the hippocampus. Mediates Zn(2+) reuptake from the secreted milk within the alveolar lumen. This is Zinc transporter ZIP3 (SLC39A3) from Bos taurus (Bovine).